Here is a 225-residue protein sequence, read N- to C-terminus: Ribonuclease 3 (225 aa).

The 123-residue stretch at 5 to 127 (LERLQRQIGY…IIGAISLDSD (123 aa)) folds into the RNase III domain. E40 is a Mg(2+) binding site. Residue D44 is part of the active site. Mg(2+) is bound by residues D113 and E116. E116 is an active-site residue. A DRBM domain is found at 154-224 (DPKTRLQEYL…AEKILQLLEM (71 aa)).

It belongs to the ribonuclease III family. In terms of assembly, homodimer. Mg(2+) serves as cofactor.

It localises to the cytoplasm. The enzyme catalyses Endonucleolytic cleavage to 5'-phosphomonoester.. Digests double-stranded RNA. Involved in the processing of primary rRNA transcript to yield the immediate precursors to the large and small rRNAs (23S and 16S). Also processes some mRNAs, and tRNAs when they are encoded in the rRNA operon. Functionally, CRISPR (clustered regularly interspaced short palindromic repeat) is an adaptive immune system that provides protection against mobile genetic elements (viruses, transposable elements and conjugative plasmids). CRISPR clusters contain spacers, sequences complementary to antecedent mobile elements, and target invading nucleic acids. CRISPR clusters are transcribed and processed into CRISPR RNA (crRNA). In this organism endogenous ribonuclease 3 and Cas9 are required for correct coprocessing of pre-crRNA and the trans-encoded small RNA (tracrRNA). Cas9, crRNA and tracrRNA are required for cleavage of invading DNA. Complements pre-crRNA and tracrRNA coprocessing defects in an rnc deletion in S.pyogenes strain 370. In Pasteurella multocida (strain Pm70), this protein is Ribonuclease 3.